The chain runs to 131 residues: D-ribose pyranase (131 aa).

His-20 functions as the Proton donor in the catalytic mechanism. Substrate contacts are provided by residues Asp-28, His-98, and 120–122 (YAN).

It belongs to the RbsD / FucU family. RbsD subfamily. As to quaternary structure, homodecamer.

It localises to the cytoplasm. It carries out the reaction beta-D-ribopyranose = beta-D-ribofuranose. It functions in the pathway carbohydrate metabolism; D-ribose degradation; D-ribose 5-phosphate from beta-D-ribopyranose: step 1/2. In terms of biological role, catalyzes the interconversion of beta-pyran and beta-furan forms of D-ribose. The polypeptide is D-ribose pyranase (Clostridium novyi (strain NT)).